Reading from the N-terminus, the 354-residue chain is UDP-N-acetylglucosamine--N-acetylmuramyl-(pentapeptide) pyrophosphoryl-undecaprenol N-acetylglucosamine transferase (354 aa).

UDP-N-acetyl-alpha-D-glucosamine is bound by residues Thr15–Gly17, Asn127, Arg163, Ser191, Ile244, Ala263–Glu268, and Gln288.

It belongs to the glycosyltransferase 28 family. MurG subfamily.

It localises to the cell inner membrane. It carries out the reaction di-trans,octa-cis-undecaprenyl diphospho-N-acetyl-alpha-D-muramoyl-L-alanyl-D-glutamyl-meso-2,6-diaminopimeloyl-D-alanyl-D-alanine + UDP-N-acetyl-alpha-D-glucosamine = di-trans,octa-cis-undecaprenyl diphospho-[N-acetyl-alpha-D-glucosaminyl-(1-&gt;4)]-N-acetyl-alpha-D-muramoyl-L-alanyl-D-glutamyl-meso-2,6-diaminopimeloyl-D-alanyl-D-alanine + UDP + H(+). The protein operates within cell wall biogenesis; peptidoglycan biosynthesis. In terms of biological role, cell wall formation. Catalyzes the transfer of a GlcNAc subunit on undecaprenyl-pyrophosphoryl-MurNAc-pentapeptide (lipid intermediate I) to form undecaprenyl-pyrophosphoryl-MurNAc-(pentapeptide)GlcNAc (lipid intermediate II). In Vibrio cholerae serotype O1 (strain ATCC 39541 / Classical Ogawa 395 / O395), this protein is UDP-N-acetylglucosamine--N-acetylmuramyl-(pentapeptide) pyrophosphoryl-undecaprenol N-acetylglucosamine transferase.